The primary structure comprises 232 residues: Dehydrin DHN3 (232 aa).

Polar residues predominate over residues 1–14; the sequence is MSQYQNQYGAQTGM. Disordered stretches follow at residues 1 to 66 and 140 to 232; these read MSQY…QHRG and EHHG…CTGH. The span at 49 to 60 shows a compositional bias: gly residues; it reads TTGGATGQGHGH. Over residues 140-157 the composition is skewed to basic and acidic residues; sequence EHHGDKKGVMDKIKEKIP. Residues 159–168 are compositionally biased toward polar residues; it reads TEQSRTNTDG. Over residues 198–223 the composition is skewed to basic and acidic residues; the sequence is EQQDVHHGDEQHGEKKGIMEKIKEKL.

It belongs to the plant dehydrin family.

The chain is Dehydrin DHN3 (DHN3) from Pisum sativum (Garden pea).